Here is a 419-residue protein sequence, read N- to C-terminus: 3-isopropylmalate dehydratase large subunit (419 aa).

Residues Cys301, Cys361, and Cys364 each contribute to the [4Fe-4S] cluster site.

It belongs to the aconitase/IPM isomerase family. LeuC type 2 subfamily. As to quaternary structure, heterodimer of LeuC and LeuD. [4Fe-4S] cluster serves as cofactor.

The catalysed reaction is (2R,3S)-3-isopropylmalate = (2S)-2-isopropylmalate. It participates in amino-acid biosynthesis; L-leucine biosynthesis; L-leucine from 3-methyl-2-oxobutanoate: step 2/4. Functionally, catalyzes the isomerization between 2-isopropylmalate and 3-isopropylmalate, via the formation of 2-isopropylmaleate. The protein is 3-isopropylmalate dehydratase large subunit of Campylobacter hominis (strain ATCC BAA-381 / DSM 21671 / CCUG 45161 / LMG 19568 / NCTC 13146 / CH001A).